A 260-amino-acid polypeptide reads, in one-letter code: Adenosylcobinamide-GDP ribazoletransferase (260 aa).

The next 7 helical transmembrane spans lie at 31 to 51, 55 to 75, 111 to 131, 140 to 160, 177 to 197, 202 to 222, and 234 to 254; these read IIFF…LVNI, IFSS…VRGI, VIGV…FAFV, FLIF…LMYY, ISSW…VYFT, FIFL…LKKF, and HLGA…LLGE.

The protein belongs to the CobS family. The cofactor is Mg(2+).

Its subcellular location is the cell inner membrane. The catalysed reaction is alpha-ribazole + adenosylcob(III)inamide-GDP = adenosylcob(III)alamin + GMP + H(+). It carries out the reaction alpha-ribazole 5'-phosphate + adenosylcob(III)inamide-GDP = adenosylcob(III)alamin 5'-phosphate + GMP + H(+). The protein operates within cofactor biosynthesis; adenosylcobalamin biosynthesis; adenosylcobalamin from cob(II)yrinate a,c-diamide: step 7/7. Joins adenosylcobinamide-GDP and alpha-ribazole to generate adenosylcobalamin (Ado-cobalamin). Also synthesizes adenosylcobalamin 5'-phosphate from adenosylcobinamide-GDP and alpha-ribazole 5'-phosphate. This is Adenosylcobinamide-GDP ribazoletransferase from Thermodesulfovibrio yellowstonii (strain ATCC 51303 / DSM 11347 / YP87).